The following is a 292-amino-acid chain: Diaminopimelate epimerase (292 aa).

Substrate contacts are provided by Asn-14 and Asn-81. Cys-90 serves as the catalytic Proton donor. Substrate contacts are provided by residues 91-92 (GN), Asn-166, Asn-202, and 220-221 (ER). The active-site Proton acceptor is Cys-229. 230 to 231 (GT) is a substrate binding site.

This sequence belongs to the diaminopimelate epimerase family. As to quaternary structure, homodimer.

The protein localises to the cytoplasm. The enzyme catalyses (2S,6S)-2,6-diaminopimelate = meso-2,6-diaminopimelate. The protein operates within amino-acid biosynthesis; L-lysine biosynthesis via DAP pathway; DL-2,6-diaminopimelate from LL-2,6-diaminopimelate: step 1/1. Functionally, catalyzes the stereoinversion of LL-2,6-diaminopimelate (L,L-DAP) to meso-diaminopimelate (meso-DAP), a precursor of L-lysine and an essential component of the bacterial peptidoglycan. This Rhodococcus erythropolis (strain PR4 / NBRC 100887) protein is Diaminopimelate epimerase.